The chain runs to 32 residues: Putative leucine-rich repeat protein PS14 (32 aa).

This Pinus strobus (Eastern white pine) protein is Putative leucine-rich repeat protein PS14.